The primary structure comprises 541 residues: MEKSSYFLFGGTNFNKKKFAPDFAKFKNSTEDDDSNKKVNFFVEEEEDTEQPEAEKVIVSSKKRKRRSSNSVPVEGFDVFKSSKKARAKGKAEEQITKNEIVENPKKELNRQMERDALSRKQYSIHVSGNNIPPPLKSFAELSSRYGCEGYILRNLAELGFKEPTPIQRQAIPILLSGRECFACAPTGSGKTFAFICPMLIKLKRPSTDGIRAVILSPARELAAQTAREGKKLIKGSNFHIRLMTKPLVKTADFSKLWCDVLISTPMRLKRAIKAKKIDLSKVEYLVLDESDKLFEQSLLKQIDCVVKACSNPSIIRSLFSATLPDSVEELARSIMHDAVRVIIGRKNTASETVKQKLVFAGSEEGKLLALRQSFAESLNPPVLIFVQSKERAKELYDELKCENIRAGVIHSDLPPGERENAVDQFRAGEKWVLIATDVIARGMDFKGINCVINYDFPDSASAYIHRIGRSGRAGRSGEAITFYTEQDVPFLRNIANTMMSSGCEVPSWIMSLKKKKWRKHRPRRDSISTKPKADKNDTDE.

Acidic residues predominate over residues Val43–Pro52. The tract at residues Val43–Val72 is disordered. The short motif at Glu141–Arg169 is the Q motif element. The 171-residue stretch at Ile172–Val342 folds into the Helicase ATP-binding domain. Residue Ala185 to Thr192 coordinates ATP. The short motif at Asp289–Asp292 is the DEAD box element. The region spanning Ala370 to Lys514 is the Helicase C-terminal domain. The segment at Lys517–Glu541 is disordered. Positions Arg525 to Glu541 are enriched in basic and acidic residues.

This sequence belongs to the DEAD box helicase family. DDX52/ROK1 subfamily.

The enzyme catalyses ATP + H2O = ADP + phosphate + H(+). The chain is DEAD-box ATP-dependent RNA helicase 57 (RH57) from Arabidopsis thaliana (Mouse-ear cress).